Consider the following 251-residue polypeptide: MNLNSIPAFDDNYIWVLNDEAGRCLIVDPGDAEPVLNAITANNWQPEAIFLTHHHHDHVGGVKELVEKFPQIVVYGPQETQDKGTTQVVKDGETAFVLGHEFSVITTPGHTLGHICYFSKPYLFCGDTLFSGGCGRLFEGTALQMYQSLKKLSALPDDTLVCCAHEYTLSNMKFALSIFPHDLSINDYYRKVKELRAKNQITLPVILKNERQINVFLRTEDIDLINGINEETLLQQPEERFAWLRSKKDRF.

His53, His55, Asp57, His58, His110, Asp127, and His165 together coordinate Zn(2+).

This sequence belongs to the metallo-beta-lactamase superfamily. Glyoxalase II family. Monomer. Zn(2+) serves as cofactor.

The catalysed reaction is an S-(2-hydroxyacyl)glutathione + H2O = a 2-hydroxy carboxylate + glutathione + H(+). Its pathway is secondary metabolite metabolism; methylglyoxal degradation; (R)-lactate from methylglyoxal: step 2/2. Functionally, thiolesterase that catalyzes the hydrolysis of S-D-lactoyl-glutathione to form glutathione and D-lactic acid. The chain is Hydroxyacylglutathione hydrolase from Shigella boydii serotype 4 (strain Sb227).